The chain runs to 157 residues: MRCPFCGHAESQVKDSRPSEDGAAIRRRRMCPECGGRFTTFERVQLRELIIVKRSGRRSPFDRDKLVRSVGLATQKRPVDPERVERMVNGIVRQLESMGETELPSSTVGEMVMKALKSLDDVAYVRYASVYRDFKETSDFAKFLTEEGLSDGGEEEL.

A zinc finger lies at 3 to 34 (CPFCGHAESQVKDSRPSEDGAAIRRRRMCPEC). An ATP-cone domain is found at 49–139 (LIIVKRSGRR…VYRDFKETSD (91 aa)).

The protein belongs to the NrdR family. Zn(2+) serves as cofactor.

In terms of biological role, negatively regulates transcription of bacterial ribonucleotide reductase nrd genes and operons by binding to NrdR-boxes. This Caulobacter vibrioides (strain ATCC 19089 / CIP 103742 / CB 15) (Caulobacter crescentus) protein is Transcriptional repressor NrdR.